A 254-amino-acid chain; its full sequence is PAXIP1-associated glutamate-rich protein 1 (254 aa).

Disordered regions lie at residues Met-1 to Glu-111 and Leu-127 to Tyr-254. A compositionally biased stretch (basic and acidic residues) spans Lys-45 to Ser-62. Acidic residues predominate over residues Glu-78–Leu-98. Residues Tyr-116–Glu-160 are sufficient for interaction with NCOA1. At Thr-138 the chain carries Phosphothreonine. Acidic residues predominate over residues Gln-142–Glu-159. Residues Ser-143 and Ser-148 each carry the phosphoserine modification. The interval Lys-161 to Tyr-254 is sufficient for interaction with ESR1. Positions Gln-195–Arg-223 are enriched in basic and acidic residues. Residue Ser-237 is modified to Phosphoserine.

Component of the KMT2 family MLL2/MLL3 complex (also named ASCOM complex), at least composed of the HMTs KMT2D and/or KMT2C, the common subunits ASH2L, RBBP5, WDR5 and DPY30, and the complex type-specific subunits PAXIP1/PTIP, PAGR1, NCOA6 and KDM6A; PAXIP1 is required for the association with the MLL2/MLL3 complex. Forms a constitutive complex with PAXIP1/PTIP independently of the MLL2/MLL3 complex. Interacts with NCOA1, ESR1, NR3C1, AR. In terms of tissue distribution, ubiquitously expressed.

It localises to the nucleus. In terms of biological role, its association with the histone methyltransferase MLL2/MLL3 complex is suggesting a role in epigenetic transcriptional activation. However, in association with PAXIP1/PTIP is proposed to function at least in part independently of the MLL2/MLL3 complex. Proposed to be recruited by PAXIP1 to sites of DNA damage where the PAGR1:PAXIP1 complex is required for cell survival in response to DNA damage independently of the MLL2/MLL3 complex. However, its function in DNA damage has been questioned. During immunoglobulin class switching in activated B-cells is involved in transcription regulation of downstream switch regions at the immunoglobulin heavy-chain (Igh) locus independently of the MLL2/MLL3 complex. Involved in both estrogen receptor-regulated gene transcription and estrogen-stimulated G1/S cell-cycle transition. Acts as a transcriptional cofactor for nuclear hormone receptors. Inhibits the induction properties of several steroid receptors such as NR3C1, AR and PPARG; the mechanism of inhibition appears to be gene-dependent. The protein is PAXIP1-associated glutamate-rich protein 1 (PAGR1) of Homo sapiens (Human).